The chain runs to 157 residues: Endoribonuclease YbeY (157 aa).

Zn(2+) is bound by residues H114, H118, and H124.

It belongs to the endoribonuclease YbeY family. Requires Zn(2+) as cofactor.

The protein localises to the cytoplasm. Its function is as follows. Single strand-specific metallo-endoribonuclease involved in late-stage 70S ribosome quality control and in maturation of the 3' terminus of the 16S rRNA. This chain is Endoribonuclease YbeY, found in Serratia proteamaculans (strain 568).